The sequence spans 127 residues: Aspartate 1-decarboxylase (127 aa).

Catalysis depends on Ser25, which acts as the Schiff-base intermediate with substrate; via pyruvic acid. The residue at position 25 (Ser25) is a Pyruvic acid (Ser). Position 57 (Thr57) interacts with substrate. Catalysis depends on Tyr58, which acts as the Proton donor. 73–75 (GAA) serves as a coordination point for substrate.

The protein belongs to the PanD family. In terms of assembly, heterooctamer of four alpha and four beta subunits. Pyruvate serves as cofactor. Post-translationally, is synthesized initially as an inactive proenzyme, which is activated by self-cleavage at a specific serine bond to produce a beta-subunit with a hydroxyl group at its C-terminus and an alpha-subunit with a pyruvoyl group at its N-terminus.

It localises to the cytoplasm. It catalyses the reaction L-aspartate + H(+) = beta-alanine + CO2. Its pathway is cofactor biosynthesis; (R)-pantothenate biosynthesis; beta-alanine from L-aspartate: step 1/1. Functionally, catalyzes the pyruvoyl-dependent decarboxylation of aspartate to produce beta-alanine. The polypeptide is Aspartate 1-decarboxylase (Exiguobacterium sibiricum (strain DSM 17290 / CCUG 55495 / CIP 109462 / JCM 13490 / 255-15)).